The following is a 932-amino-acid chain: Isoleucine--tRNA ligase (932 aa).

Residues 57–67 (PYANGDIHIGT) carry the 'HIGH' region motif. L-isoleucyl-5'-AMP is bound at residue Glu559. A 'KMSKS' region motif is present at residues 600-604 (KMSKS). Lys603 is an ATP binding site. Residues Cys899, Cys902, Cys919, and Cys922 each contribute to the Zn(2+) site.

This sequence belongs to the class-I aminoacyl-tRNA synthetase family. IleS type 1 subfamily. In terms of assembly, monomer. Zn(2+) serves as cofactor.

The protein resides in the cytoplasm. The enzyme catalyses tRNA(Ile) + L-isoleucine + ATP = L-isoleucyl-tRNA(Ile) + AMP + diphosphate. In terms of biological role, catalyzes the attachment of isoleucine to tRNA(Ile). As IleRS can inadvertently accommodate and process structurally similar amino acids such as valine, to avoid such errors it has two additional distinct tRNA(Ile)-dependent editing activities. One activity is designated as 'pretransfer' editing and involves the hydrolysis of activated Val-AMP. The other activity is designated 'posttransfer' editing and involves deacylation of mischarged Val-tRNA(Ile). The chain is Isoleucine--tRNA ligase from Thermoanaerobacter pseudethanolicus (strain ATCC 33223 / 39E) (Clostridium thermohydrosulfuricum).